The sequence spans 296 residues: Glycine--tRNA ligase alpha subunit (296 aa).

This sequence belongs to the class-II aminoacyl-tRNA synthetase family. Tetramer of two alpha and two beta subunits.

Its subcellular location is the cytoplasm. It catalyses the reaction tRNA(Gly) + glycine + ATP = glycyl-tRNA(Gly) + AMP + diphosphate. The polypeptide is Glycine--tRNA ligase alpha subunit (Desulfitobacterium hafniense (strain DSM 10664 / DCB-2)).